A 233-amino-acid chain; its full sequence is DnaA regulatory inactivator Hda (233 aa).

The protein belongs to the DnaA family. HdA subfamily. In terms of assembly, the active form seems to be an ADP-bound monomer. Forms the RIDA complex (regulatory inactivation of DnaA) of ATP-DnaA, ADP-Hda and the DNA-loaded beta sliding clamp (dnaN).

In terms of biological role, mediates the interaction of DNA replication initiator protein DnaA with DNA polymerase subunit beta sliding clamp (dnaN). Stimulates hydrolysis of ATP-DnaA to ADP-DnaA, rendering DnaA inactive for reinitiation, a process called regulatory inhibition of DnaA or RIDA. This chain is DnaA regulatory inactivator Hda, found in Photorhabdus laumondii subsp. laumondii (strain DSM 15139 / CIP 105565 / TT01) (Photorhabdus luminescens subsp. laumondii).